The chain runs to 244 residues: Pyridoxine 5'-phosphate synthase (244 aa).

N9 provides a ligand contact to 3-amino-2-oxopropyl phosphate. D11 to H12 contributes to the 1-deoxy-D-xylulose 5-phosphate binding site. R20 contacts 3-amino-2-oxopropyl phosphate. Residue H45 is the Proton acceptor of the active site. 2 residues coordinate 1-deoxy-D-xylulose 5-phosphate: R47 and H52. The active-site Proton acceptor is E72. Position 102 (T102) interacts with 1-deoxy-D-xylulose 5-phosphate. The active-site Proton donor is the H193. 3-amino-2-oxopropyl phosphate contacts are provided by residues G194 and G215–H216.

The protein belongs to the PNP synthase family. As to quaternary structure, homooctamer; tetramer of dimers.

It is found in the cytoplasm. It catalyses the reaction 3-amino-2-oxopropyl phosphate + 1-deoxy-D-xylulose 5-phosphate = pyridoxine 5'-phosphate + phosphate + 2 H2O + H(+). The protein operates within cofactor biosynthesis; pyridoxine 5'-phosphate biosynthesis; pyridoxine 5'-phosphate from D-erythrose 4-phosphate: step 5/5. Its function is as follows. Catalyzes the complicated ring closure reaction between the two acyclic compounds 1-deoxy-D-xylulose-5-phosphate (DXP) and 3-amino-2-oxopropyl phosphate (1-amino-acetone-3-phosphate or AAP) to form pyridoxine 5'-phosphate (PNP) and inorganic phosphate. The chain is Pyridoxine 5'-phosphate synthase from Blochmanniella pennsylvanica (strain BPEN).